We begin with the raw amino-acid sequence, 503 residues long: uncharacterized protein (503 aa).

This sequence belongs to the Mg-chelatase subunits D/I family. ComM subfamily.

This is an uncharacterized protein from Mycobacterium tuberculosis (strain CDC 1551 / Oshkosh).